The primary structure comprises 37 residues: Large ribosomal subunit protein bL36 (37 aa).

Cys-11, Cys-14, Cys-27, and His-32 together coordinate Zn(2+).

Belongs to the bacterial ribosomal protein bL36 family. As to quaternary structure, part of the 50S ribosomal subunit. The cofactor is Zn(2+).

Functionally, binds the 23S rRNA. In Deinococcus radiodurans (strain ATCC 13939 / DSM 20539 / JCM 16871 / CCUG 27074 / LMG 4051 / NBRC 15346 / NCIMB 9279 / VKM B-1422 / R1), this protein is Large ribosomal subunit protein bL36 (rpmJ).